The sequence spans 236 residues: Leucyl/phenylalanyl-tRNA--protein transferase (236 aa).

It belongs to the L/F-transferase family.

It localises to the cytoplasm. The catalysed reaction is N-terminal L-lysyl-[protein] + L-leucyl-tRNA(Leu) = N-terminal L-leucyl-L-lysyl-[protein] + tRNA(Leu) + H(+). The enzyme catalyses N-terminal L-arginyl-[protein] + L-leucyl-tRNA(Leu) = N-terminal L-leucyl-L-arginyl-[protein] + tRNA(Leu) + H(+). It catalyses the reaction L-phenylalanyl-tRNA(Phe) + an N-terminal L-alpha-aminoacyl-[protein] = an N-terminal L-phenylalanyl-L-alpha-aminoacyl-[protein] + tRNA(Phe). In terms of biological role, functions in the N-end rule pathway of protein degradation where it conjugates Leu, Phe and, less efficiently, Met from aminoacyl-tRNAs to the N-termini of proteins containing an N-terminal arginine or lysine. The sequence is that of Leucyl/phenylalanyl-tRNA--protein transferase from Nitrosomonas europaea (strain ATCC 19718 / CIP 103999 / KCTC 2705 / NBRC 14298).